A 116-amino-acid chain; its full sequence is MLLTPAKTTRTEDSANSTDDSSKSSNSFMRAIVSSLMVKPITSLTNTVTCRQSSHHNSSPSKITRYDLIKAAAENDLKRSKSQGREKSRRNSNRRNNEEIFVANTASEIQRTKSSI.

2 disordered regions span residues 1-26 and 74-116; these read MLLTPAKTTRTEDSANSTDDSSKSSN and ENDL…KSSI. A compositionally biased stretch (low complexity) spans 14–26; sequence SANSTDDSSKSSN. The span at 74-86 shows a compositional bias: basic and acidic residues; sequence ENDLKRSKSQGRE. A compositionally biased stretch (polar residues) spans 104–116; that stretch reads NTASEIQRTKSSI.

This is an uncharacterized protein from Saccharomyces cerevisiae (strain ATCC 204508 / S288c) (Baker's yeast).